The primary structure comprises 128 residues: NADPH-dependent 7-cyano-7-deazaguanine reductase (128 aa).

The Thioimide intermediate role is filled by cysteine 34. Residue aspartate 41 is the Proton donor of the active site. Substrate-binding positions include 56-58 (VEL) and 75-76 (HE).

The protein belongs to the GTP cyclohydrolase I family. QueF type 1 subfamily.

It is found in the cytoplasm. The enzyme catalyses 7-aminomethyl-7-carbaguanine + 2 NADP(+) = 7-cyano-7-deazaguanine + 2 NADPH + 3 H(+). It functions in the pathway tRNA modification; tRNA-queuosine biosynthesis. Catalyzes the NADPH-dependent reduction of 7-cyano-7-deazaguanine (preQ0) to 7-aminomethyl-7-deazaguanine (preQ1). In Thermomicrobium roseum (strain ATCC 27502 / DSM 5159 / P-2), this protein is NADPH-dependent 7-cyano-7-deazaguanine reductase.